We begin with the raw amino-acid sequence, 165 residues long: Protein C2-DOMAIN ABA-RELATED 7 (165 aa).

N-acetylmethionine is present on Met-1. The region spanning 1–106 (MEELVGLLRI…HKMGLQELPD (106 aa)) is the C2 domain. Arg-21, Asp-22, Asp-27, Asp-73, Lys-74, Asp-75, and Asp-81 together coordinate Ca(2+).

The protein belongs to the plant CAR protein family. Binds to PYR/PYL/RCAR abscisic acid intracellular receptors in an ABA-independent manner, both at the plasma membrane and in the nucleus.

The protein localises to the cell membrane. It is found in the nucleus. Its function is as follows. Stimulates the GTPase/ATPase activities of Obg-like ATPases. Mediates the transient calcium-dependent interaction of PYR/PYL/RCAR abscisic acid (ABA) receptors with the plasma membrane and thus regulates ABA sensitivity. The protein is Protein C2-DOMAIN ABA-RELATED 7 of Arabidopsis thaliana (Mouse-ear cress).